The sequence spans 68 residues: DNA-directed RNA polymerase subunit Rpo10 (68 aa).

4 residues coordinate Zn(2+): Cys-7, Cys-10, Cys-44, and Cys-45.

This sequence belongs to the archaeal Rpo10/eukaryotic RPB10 RNA polymerase subunit family. In terms of assembly, part of the RNA polymerase complex. Zn(2+) is required as a cofactor.

The protein localises to the cytoplasm. It catalyses the reaction RNA(n) + a ribonucleoside 5'-triphosphate = RNA(n+1) + diphosphate. DNA-dependent RNA polymerase (RNAP) catalyzes the transcription of DNA into RNA using the four ribonucleoside triphosphates as substrates. The polypeptide is DNA-directed RNA polymerase subunit Rpo10 (Methanococcus vannielii (strain ATCC 35089 / DSM 1224 / JCM 13029 / OCM 148 / SB)).